The chain runs to 142 residues: Small heat shock protein IbpB (142 aa).

Residues 26–137 form the sHSP domain; that stretch reads SGESQSFPPY…PPQRIAINER (112 aa).

Belongs to the small heat shock protein (HSP20) family. In terms of assembly, homodimer. Forms homomultimers of about 100-150 subunits at optimal growth temperatures. Conformation changes to oligomers at high temperatures or high ionic concentrations. The decrease in size of the multimers is accompanied by an increase in chaperone activity.

It is found in the cytoplasm. In terms of biological role, associates with aggregated proteins, together with IbpA, to stabilize and protect them from irreversible denaturation and extensive proteolysis during heat shock and oxidative stress. Aggregated proteins bound to the IbpAB complex are more efficiently refolded and reactivated by the ATP-dependent chaperone systems ClpB and DnaK/DnaJ/GrpE. Its activity is ATP-independent. The chain is Small heat shock protein IbpB from Salmonella typhi.